A 382-amino-acid polypeptide reads, in one-letter code: MKVHEYQAKEIFSTYGIPVERHALCHTADGAVAAYHRMGVNRVAIKAQVLTGGRGKAGGVKLANNDRDVYQYAQTILEMTIKGYPVTKILLSEAVNIAAEYYISFTIDRNTRSVTLIMSAAGGMDIEEVARQSPEKIIRCSIDPLIGVPDYLAHKFAFSLFEQAEQANRMATIIQDLYKAFIEKDASLAEINPLVLTPVGTLLAIDAKMVFDDNALYRHPDLQKLSEPTEDEKLEAIAKERGFSYVRMDGEIGCMVNGAGLAMTTMDMIKLYGGNPANFLDIGGSSNPVKVIEAMRLLLDDKKVKVVFINIFGGITRCDDVAIGLLQAFEQIQTDIPIIVRLTGTNGNMGRELLRKNNRFQVAQTMEEATKMAIESLKKESI.

Residues lysine 46, 53 to 55, valine 95, and glutamate 100 contribute to the ATP site; that span reads GRG. The Mg(2+) site is built by asparagine 192 and aspartate 206. Residues asparagine 257 and 314–316 each bind substrate; that span reads GIT.

The protein belongs to the succinate/malate CoA ligase beta subunit family. As to quaternary structure, heterotetramer of two alpha and two beta subunits. It depends on Mg(2+) as a cofactor.

The enzyme catalyses succinate + ATP + CoA = succinyl-CoA + ADP + phosphate. It catalyses the reaction GTP + succinate + CoA = succinyl-CoA + GDP + phosphate. It participates in carbohydrate metabolism; tricarboxylic acid cycle; succinate from succinyl-CoA (ligase route): step 1/1. In terms of biological role, succinyl-CoA synthetase functions in the citric acid cycle (TCA), coupling the hydrolysis of succinyl-CoA to the synthesis of either ATP or GTP and thus represents the only step of substrate-level phosphorylation in the TCA. The beta subunit provides nucleotide specificity of the enzyme and binds the substrate succinate, while the binding sites for coenzyme A and phosphate are found in the alpha subunit. The sequence is that of Succinate--CoA ligase [ADP-forming] subunit beta from Bacteroides fragilis (strain ATCC 25285 / DSM 2151 / CCUG 4856 / JCM 11019 / LMG 10263 / NCTC 9343 / Onslow / VPI 2553 / EN-2).